Reading from the N-terminus, the 339-residue chain is Probable N5-carboxyaminoimidazole ribonucleotide mutase (339 aa).

Residues serine 11, aspartate 14, and arginine 41 each coordinate substrate.

The protein belongs to the AIR carboxylase family. Class I subfamily.

It catalyses the reaction 5-carboxyamino-1-(5-phospho-D-ribosyl)imidazole + H(+) = 5-amino-1-(5-phospho-D-ribosyl)imidazole-4-carboxylate. The protein operates within purine metabolism; IMP biosynthesis via de novo pathway; 5-amino-1-(5-phospho-D-ribosyl)imidazole-4-carboxylate from 5-amino-1-(5-phospho-D-ribosyl)imidazole (N5-CAIR route): step 2/2. In terms of biological role, catalyzes the conversion of N5-carboxyaminoimidazole ribonucleotide (N5-CAIR) to 4-carboxy-5-aminoimidazole ribonucleotide (CAIR). This is Probable N5-carboxyaminoimidazole ribonucleotide mutase from Methanobrevibacter smithii.